Reading from the N-terminus, the 129-residue chain is Lysozyme C-3 (129 aa).

In terms of domain architecture, C-type lysozyme spans 1–129 (KVYERCELAA…VSRWIRGCRL (129 aa)). 4 cysteine pairs are disulfide-bonded: cysteine 6–cysteine 127, cysteine 30–cysteine 115, cysteine 64–cysteine 80, and cysteine 76–cysteine 94. Active-site residues include glutamate 35 and aspartate 52.

The protein belongs to the glycosyl hydrolase 22 family.

It is found in the secreted. It catalyses the reaction Hydrolysis of (1-&gt;4)-beta-linkages between N-acetylmuramic acid and N-acetyl-D-glucosamine residues in a peptidoglycan and between N-acetyl-D-glucosamine residues in chitodextrins.. In terms of biological role, lysozymes have primarily a bacteriolytic function; those in tissues and body fluids are associated with the monocyte-macrophage system and enhance the activity of immunoagents. The chain is Lysozyme C-3 from Anas platyrhynchos (Mallard).